A 152-amino-acid chain; its full sequence is 17.1 kDa class II heat shock protein (152 aa).

In terms of domain architecture, sHSP spans 36–152; sequence DAKAMAATPA…KPKTIQVKVA (117 aa).

The protein belongs to the small heat shock protein (HSP20) family.

The protein resides in the cytoplasm. The protein is 17.1 kDa class II heat shock protein (HSP17.7) of Pisum sativum (Garden pea).